The chain runs to 255 residues: Type III pantothenate kinase (255 aa).

Position 6 to 13 (6 to 13) interacts with ATP; sequence DVGNTNTV. 108–111 is a binding site for substrate; that stretch reads GADR. Catalysis depends on aspartate 110, which acts as the Proton acceptor. Aspartate 130 is a binding site for K(+). Residue threonine 133 coordinates ATP. Threonine 185 lines the substrate pocket.

Belongs to the type III pantothenate kinase family. In terms of assembly, homodimer. The cofactor is NH4(+). Requires K(+) as cofactor.

The protein resides in the cytoplasm. It carries out the reaction (R)-pantothenate + ATP = (R)-4'-phosphopantothenate + ADP + H(+). It functions in the pathway cofactor biosynthesis; coenzyme A biosynthesis; CoA from (R)-pantothenate: step 1/5. Its function is as follows. Catalyzes the phosphorylation of pantothenate (Pan), the first step in CoA biosynthesis. This Hyphomonas neptunium (strain ATCC 15444) protein is Type III pantothenate kinase.